We begin with the raw amino-acid sequence, 156 residues long: Protein CROC-4 (156 aa).

Positions 46-71 (RATSSTTDSSRAPSSPRPPGSTSHCG) are disordered. Over residues 48–59 (TSSTTDSSRAPS) the composition is skewed to low complexity.

Expressed throughout the brain in the thalamus, subthalamic nucleus, corpus callosum, hippocampus, substantia nigra, caudate nucleus, and amygdala.

The protein localises to the nucleus. Its function is as follows. May play a role in FOS signaling pathways involved in development and remodeling of neurons. Promotes transcription of the FOS promoter. In Homo sapiens (Human), this protein is Protein CROC-4.